A 90-amino-acid chain; its full sequence is UPF0297 protein ABC1593 (90 aa).

This sequence belongs to the UPF0297 family.

This Shouchella clausii (strain KSM-K16) (Alkalihalobacillus clausii) protein is UPF0297 protein ABC1593.